A 568-amino-acid chain; its full sequence is Kelch-like protein 12 (568 aa).

The BTB domain occupies 33-100 (CDVTLRVEQK…VYTETVHVTV (68 aa)). A BACK domain is found at 135–236 (CLGIRDFAET…LTPRYITDVI (102 aa)). Kelch repeat units follow at residues 282-329 (VLLV…SLHD), 331-379 (IYVI…TLGD), 380-426 (MIYV…VASG), 427-473 (VIYC…LLND), 474-520 (HIYV…VLRG), and 522-567 (LYAI…ALRE).

Component of the BCR(KLHL12) E3 ubiquitin ligase complex, at least composed of CUL3 and KLHL12 and RBX1. This complex interacts with DVL3 upon activation of the Wnt signaling pathway by WNT3A. Interacts with DRD4, KLHL2 and SEC31A. Interacts with PEF1 and PDCD6/ALG-2; interaction takes place in response to cytosolic calcium increase and leads to bridge together the BCR(KLHL12) complex and SEC31 (SEC31A or SEC31B). Post-translationally, ubiquitinated by the SCF(FBXL17) complex, leading to its degradation by the proteasome: ubiquitination by the SCF(FBXL17) complex takes place when aberrant BTB domain dimers are formed.

Its subcellular location is the cytoplasmic vesicle. It localises to the COPII-coated vesicle. It functions in the pathway protein modification; protein ubiquitination. Functionally, substrate-specific adapter of a BCR (BTB-CUL3-RBX1) E3 ubiquitin ligase complex that acts as a negative regulator of Wnt signaling pathway and ER-Golgi transport. The BCR(KLHL12) complex is involved in ER-Golgi transport by regulating the size of COPII coats, thereby playing a key role in collagen export, which is required for embryonic stem (ES) cells division: BCR(KLHL12) acts by mediating monoubiquitination of SEC31 (SEC31A or SEC31B). The BCR(KLHL12) complex is also involved in neural crest specification: in response to cytosolic calcium increase, interacts with the heterodimer formed with PEF1 and PDCD6/ALG-2, leading to bridge together the BCR(KLHL12) complex and SEC31 (SEC31A or SEC31B), promoting monoubiquitination of SEC31 and subsequent collagen export. As part of the BCR(KLHL12) complex, also acts as a negative regulator of the Wnt signaling pathway by mediating ubiquitination and subsequent proteolysis of DVL3. The BCR(KLHL12) complex also mediates polyubiquitination of DRD4 and PEF1, without leading to degradation of these proteins. This Bos taurus (Bovine) protein is Kelch-like protein 12 (KLHL12).